The chain runs to 50 residues: Fungus-induced protein 3 (50 aa).

The chain is Fungus-induced protein 3 (fip-3) from Caenorhabditis elegans.